The primary structure comprises 113 residues: U11-theraphotoxin-Hhn1a (113 aa).

The first 21 residues, 1 to 21 (MNTVRVTFLLVFVLAVSLGQA), serve as a signal peptide directing secretion. Residues 22-74 (DKDENRMEMQEKTEQGKSYLDFAENLLLQKLEELEAKLPEEDSEESRNSRQKR) constitute a propeptide that is removed on maturation. The segment covering 58-69 (KLPEEDSEESRN) has biased composition (basic and acidic residues). The disordered stretch occupies residues 58–82 (KLPEEDSEESRNSRQKRCIGEGVPC). 3 cysteine pairs are disulfide-bonded: C75–C90, C82–C95, and C89–C110.

It belongs to the neurotoxin 14 (magi-1) family. 01 (HNTX-16) subfamily. As to expression, expressed by the venom gland.

It localises to the secreted. In terms of biological role, probable ion channel inhibitor. This Cyriopagopus hainanus (Chinese bird spider) protein is U11-theraphotoxin-Hhn1a.